Reading from the N-terminus, the 295-residue chain is MWIPYDLTGSLKAETSAASIQRSQADRSVRDVLVGFFVRNPITQSWEIDIRAEAVKEVLMAELDGMPTEIACYGGETGKLSEIIYRVKSAEPYAAFDACRHDLDDRLARWTLELGRGMTIAGWRVADPANEARWRCTPFRPSALDLDLNAVAFAPDDLKPLLRLYQRARNASDPAWRLLNAYAVLKCWRAGKAPFSLMPQQPAPVVTLEMLVHSGALGCAESFKDQPLASLVDALEVWRDAVLQDLEAPGEGAHGLRGEARWRLAHMASIADLAARETLIREIARRRSADLALAS.

It functions in the pathway one-carbon metabolism; methylamine degradation. The chain is Methylamine utilization protein MauJ (mauJ) from Methylorubrum extorquens (strain ATCC 14718 / DSM 1338 / JCM 2805 / NCIMB 9133 / AM1) (Methylobacterium extorquens).